Consider the following 369-residue polypeptide: Dihydroorotate dehydrogenase (quinone) (369 aa).

FMN-binding positions include A66–K70 and T90. Residue K70 coordinates substrate. N115 to F119 lines the substrate pocket. N143 and N176 together coordinate FMN. N176 contacts substrate. The active-site Nucleophile is the S179. Residue N181 participates in substrate binding. Residues K217 and T245 each coordinate FMN. Position 246-247 (N246–T247) interacts with substrate. Residues G271, G300, and Y321–T322 each bind FMN.

This sequence belongs to the dihydroorotate dehydrogenase family. Type 2 subfamily. Monomer. Requires FMN as cofactor.

Its subcellular location is the cell membrane. The enzyme catalyses (S)-dihydroorotate + a quinone = orotate + a quinol. It functions in the pathway pyrimidine metabolism; UMP biosynthesis via de novo pathway; orotate from (S)-dihydroorotate (quinone route): step 1/1. Its function is as follows. Catalyzes the conversion of dihydroorotate to orotate with quinone as electron acceptor. This Nocardia farcinica (strain IFM 10152) protein is Dihydroorotate dehydrogenase (quinone).